Reading from the N-terminus, the 308-residue chain is D-alanine--D-alanine ligase B (308 aa).

Residues 102–302 (KKVAAAAGVV…FAELLSWMVE (201 aa)) enclose the ATP-grasp domain. Position 128 to 183 (128 to 183 (PMKPPYVVKPVREGSSFGVVIVKEDQPHPPQVIGSADWKYGDEVMVEGYIAGRELT)) interacts with ATP. Positions 252, 269, and 271 each coordinate Mg(2+).

It belongs to the D-alanine--D-alanine ligase family. Requires Mg(2+) as cofactor. The cofactor is Mn(2+).

It localises to the cytoplasm. The enzyme catalyses 2 D-alanine + ATP = D-alanyl-D-alanine + ADP + phosphate + H(+). It functions in the pathway cell wall biogenesis; peptidoglycan biosynthesis. Its function is as follows. Cell wall formation. The sequence is that of D-alanine--D-alanine ligase B from Brucella suis biovar 1 (strain 1330).